We begin with the raw amino-acid sequence, 479 residues long: Probable cytosol aminopeptidase (479 aa).

2 residues coordinate Mn(2+): Lys-251 and Asp-256. Lys-263 is a catalytic residue. Mn(2+) contacts are provided by Asp-274, Asp-333, and Glu-335. Residue Arg-337 is part of the active site.

Belongs to the peptidase M17 family. It depends on Mn(2+) as a cofactor.

The protein localises to the cytoplasm. The catalysed reaction is Release of an N-terminal amino acid, Xaa-|-Yaa-, in which Xaa is preferably Leu, but may be other amino acids including Pro although not Arg or Lys, and Yaa may be Pro. Amino acid amides and methyl esters are also readily hydrolyzed, but rates on arylamides are exceedingly low.. The enzyme catalyses Release of an N-terminal amino acid, preferentially leucine, but not glutamic or aspartic acids.. In terms of biological role, presumably involved in the processing and regular turnover of intracellular proteins. Catalyzes the removal of unsubstituted N-terminal amino acids from various peptides. This chain is Probable cytosol aminopeptidase, found in Albidiferax ferrireducens (strain ATCC BAA-621 / DSM 15236 / T118) (Rhodoferax ferrireducens).